The following is a 434-amino-acid chain: Pre-B-cell leukemia transcription factor 3 (434 aa).

The segment at 20 to 41 (SVQGGMALPPPPHGHEGADGDG) is disordered. The segment covering 32–41 (HGHEGADGDG) has biased composition (basic and acidic residues). One can recognise a PBC domain in the interval 41 to 234 (GRKQDIGDIL…VMILRSRFLD (194 aa)). The tract at residues 48–127 (DILHQIMTIT…EGVSGPEKGG (80 aa)) is PBC-A. The interval 130–234 (AAAAAAAAAS…VMILRSRFLD (105 aa)) is PBC-B. A DNA-binding region (homeobox; TALE-type) is located at residues 235–297 (ARRKRRNFSK…NKRIRYKKNI (63 aa)). Residues 326 to 341 (NQTNSPTTPNSGSSGS) are compositionally biased toward low complexity. Disordered stretches follow at residues 326 to 349 (NQTN…NSGD) and 403 to 434 (LNAN…DTSN). Positions 403-422 (LNANGGWQDATTPSSVTSPT) are enriched in polar residues.

Belongs to the TALE/PBX homeobox family. Interacts with PBXIP1. In terms of tissue distribution, ubiquitously expressed.

It localises to the nucleus. Its function is as follows. Transcriptional activator that binds the sequence 5'-ATCAATCAA-3'. This chain is Pre-B-cell leukemia transcription factor 3 (PBX3), found in Homo sapiens (Human).